The sequence spans 230 residues: Lactate utilization protein C (230 aa).

The protein belongs to the LutC/YkgG family.

In terms of biological role, is involved in L-lactate degradation and allows cells to grow with lactate as the sole carbon source. The polypeptide is Lactate utilization protein C (Halalkalibacterium halodurans (strain ATCC BAA-125 / DSM 18197 / FERM 7344 / JCM 9153 / C-125) (Bacillus halodurans)).